Here is a 191-residue protein sequence, read N- to C-terminus: Glucose-6-phosphate 1-dehydrogenase (191 aa).

The residue at position 2 (A2) is an N-acetylalanine. A Phosphoserine modification is found at S8. Phosphothreonine is present on T10. NADP(+) is bound by residues 38–45 and Y86; that span reads GASGDLAK. D101 serves as a coordination point for D-glucose 6-phosphate. The Proton acceptor role is filled by H106. Position 163 (R163) interacts with NADP(+). K173 bears the N6-acetyllysine mark. The NADP(+) site is built by Y179 and W185. Position 179 is a phosphotyrosine (Y179).

Belongs to the glucose-6-phosphate dehydrogenase family. As to quaternary structure, homotetramer; dimer of dimers. Interacts with SIRT2; the interaction is enhanced by H(2)O(2) treatment. Forms a ternary complex with ALDOB and TP53; this interaction is direct. ALDOB stabilizes the complex inhibiting G6PD activity and keeping oxidative pentose phosphate metabolism in check. In terms of processing, acetylated by ELP3; acetylation inhibits its homodimerization and enzyme activity. Deacetylated by SIRT2; deacetylation stimulates its enzyme activity.

The protein localises to the cytoplasm. Its subcellular location is the cytosol. The protein resides in the membrane. It catalyses the reaction D-glucose 6-phosphate + NADP(+) = 6-phospho-D-glucono-1,5-lactone + NADPH + H(+). Its pathway is carbohydrate degradation; pentose phosphate pathway; D-ribulose 5-phosphate from D-glucose 6-phosphate (oxidative stage): step 1/3. In terms of biological role, cytosolic glucose-6-phosphate dehydrogenase that catalyzes the first and rate-limiting step of the oxidative branch within the pentose phosphate pathway/shunt, an alternative route to glycolysis for the dissimilation of carbohydrates and a major source of reducing power and metabolic intermediates for fatty acid and nucleic acid biosynthetic processes. The sequence is that of Glucose-6-phosphate 1-dehydrogenase (G6PD) from Didelphis virginiana (North American opossum).